The chain runs to 130 residues: uncharacterized protein (130 aa).

Residues 21 to 43 (VAVCTVAAEVLAIFTLVCTRVFI) form a helical membrane-spanning segment.

It is found in the membrane. This is an uncharacterized protein from Saccharomyces cerevisiae (strain ATCC 204508 / S288c) (Baker's yeast).